The following is a 410-amino-acid chain: Arginine deiminase (410 aa).

Cysteine 400 acts as the Amidino-cysteine intermediate in catalysis.

It belongs to the arginine deiminase family.

The protein resides in the cytoplasm. The catalysed reaction is L-arginine + H2O = L-citrulline + NH4(+). It functions in the pathway amino-acid degradation; L-arginine degradation via ADI pathway; carbamoyl phosphate from L-arginine: step 1/2. This Bacillus cytotoxicus (strain DSM 22905 / CIP 110041 / 391-98 / NVH 391-98) protein is Arginine deiminase.